The sequence spans 378 residues: Ecotin-like protein 3 (378 aa).

2 disordered regions span residues 191–216 (HRLSSSTPPLIPSAVRGSAHEAHAAP) and 238–378 (PQNN…KADP). Over residues 274–287 (NEPSPSRPRLSSTE) the composition is skewed to polar residues. Residues 337 to 348 (RKAEDNVYEKTM) are compositionally biased toward basic and acidic residues. Residues 362-378 (KASASSKKSGNGSKADP) show a composition bias toward low complexity.

The protein belongs to the protease inhibitor I11 (ecotin) family.

This is Ecotin-like protein 3 from Leishmania infantum.